Consider the following 355-residue polypeptide: Phenylalanine--tRNA ligase alpha subunit (355 aa).

E273 serves as a coordination point for Mg(2+).

Belongs to the class-II aminoacyl-tRNA synthetase family. Phe-tRNA synthetase alpha subunit type 1 subfamily. As to quaternary structure, tetramer of two alpha and two beta subunits. It depends on Mg(2+) as a cofactor.

It localises to the cytoplasm. The catalysed reaction is tRNA(Phe) + L-phenylalanine + ATP = L-phenylalanyl-tRNA(Phe) + AMP + diphosphate + H(+). This is Phenylalanine--tRNA ligase alpha subunit from Bifidobacterium longum (strain NCC 2705).